Reading from the N-terminus, the 177-residue chain is Cytochrome c oxidase assembly protein CtaG (177 aa).

Over 1–8 the chain is Cytoplasmic; that stretch reads MTQKAKNT. Residues 9–29 traverse the membrane as a helical; Signal-anchor for type II membrane protein segment; sequence IYLLILIILSMLCLVYASVPL. Residues 30–177 are Periplasmic-facing; the sequence is YSIFCKVTGY…TFFKYKENTK (148 aa).

The protein belongs to the COX11/CtaG family.

The protein localises to the cell inner membrane. Its function is as follows. Exerts its effect at some terminal stage of cytochrome c oxidase synthesis, probably by being involved in the insertion of the copper B into subunit I. In Ehrlichia ruminantium (strain Welgevonden), this protein is Cytochrome c oxidase assembly protein CtaG.